Reading from the N-terminus, the 253-residue chain is MLTKRIIPCLDVKGGRVVKGVQFLELRDAGDPVEIAEIYDRQGADELTFLDITASSDARDIIIDVVRRTAERVFMPLTVGGGVRTVEDIRRLLNAGADKVSINTAAVHRPEFVKEAAERFGSQCTVVAIDARRVPGEDRWEVYTHGGRNATGIDAVEWAQRMEAYGSGEILLTSMDRDGTKDGYDLPLTRAVADAVSIPVIASGGVGNLEHLYDGFTKGGASACLAASIFHYREYTIQEAKEYLRERGVPVRI.

Residues Asp-11 and Asp-130 contribute to the active site.

The protein belongs to the HisA/HisF family. As to quaternary structure, heterodimer of HisH and HisF.

It is found in the cytoplasm. The catalysed reaction is 5-[(5-phospho-1-deoxy-D-ribulos-1-ylimino)methylamino]-1-(5-phospho-beta-D-ribosyl)imidazole-4-carboxamide + L-glutamine = D-erythro-1-(imidazol-4-yl)glycerol 3-phosphate + 5-amino-1-(5-phospho-beta-D-ribosyl)imidazole-4-carboxamide + L-glutamate + H(+). It participates in amino-acid biosynthesis; L-histidine biosynthesis; L-histidine from 5-phospho-alpha-D-ribose 1-diphosphate: step 5/9. In terms of biological role, IGPS catalyzes the conversion of PRFAR and glutamine to IGP, AICAR and glutamate. The HisF subunit catalyzes the cyclization activity that produces IGP and AICAR from PRFAR using the ammonia provided by the HisH subunit. The sequence is that of Imidazole glycerol phosphate synthase subunit HisF from Geotalea uraniireducens (strain Rf4) (Geobacter uraniireducens).